The primary structure comprises 355 residues: Methylthioribose-1-phosphate isomerase (355 aa).

Substrate contacts are provided by residues 47–49 (RGA), Arg91, and Gln199. The Proton donor role is filled by Asp240. 250–251 (NK) lines the substrate pocket.

The protein belongs to the eIF-2B alpha/beta/delta subunits family. MtnA subfamily.

It catalyses the reaction 5-(methylsulfanyl)-alpha-D-ribose 1-phosphate = 5-(methylsulfanyl)-D-ribulose 1-phosphate. Its pathway is amino-acid biosynthesis; L-methionine biosynthesis via salvage pathway; L-methionine from S-methyl-5-thio-alpha-D-ribose 1-phosphate: step 1/6. Catalyzes the interconversion of methylthioribose-1-phosphate (MTR-1-P) into methylthioribulose-1-phosphate (MTRu-1-P). The polypeptide is Methylthioribose-1-phosphate isomerase (Oleidesulfovibrio alaskensis (strain ATCC BAA-1058 / DSM 17464 / G20) (Desulfovibrio alaskensis)).